Here is a 129-residue protein sequence, read N- to C-terminus: ALK and LTK ligand 1 (129 aa).

The first 27 residues, 1-27, serve as a signal peptide directing secretion; sequence MRPLKPGAPLPALFLLALALSPHGAHG. Residues 24–63 form a disordered region; sequence GAHGRPRGRRGARVTDKEPKPLLFLPAAGAGRTPSGSRSA. The span at 25-35 shows a compositional bias: basic residues; that stretch reads AHGRPRGRRGA. Disulfide bonds link Cys90-Cys126 and Cys104-Cys113.

This sequence belongs to the ALKAL family. As to expression, widely expressed with highest levels in thyroid and moderate levels in stomach, trachea, small intestine, prostate and brain.

It localises to the secreted. The protein localises to the cell membrane. Functionally, cytokine that acts as a physiological ligand for receptor tyrosine kinase LTK, leading to its activation. Monomeric ALKAL1 binds to LTK, leading to LTK homodimerization and activation. In contrast to ALKAL2, does not act as a potent physiological ligand for ALK. This Homo sapiens (Human) protein is ALK and LTK ligand 1.